Reading from the N-terminus, the 1508-residue chain is uncharacterized protein (1508 aa).

The stretch at 149–267 (ARRQQWRLRR…ARSLQEHRAT (119 aa)) forms a coiled coil. Disordered stretches follow at residues 248–268 (ERSE…RATE), 345–403 (SQDW…LAGS), 536–575 (FLKK…GKNL), 725–754 (GLEE…SQEH), and 868–916 (EAKS…AEPW). Over residues 868 to 881 (EAKSKESGEGDKPG) the composition is skewed to basic and acidic residues. Residues 972–1034 (ISRLERDNHR…KGNLGQLQKA (63 aa)) are a coiled coil. Disordered regions lie at residues 1158 to 1186 (LAAG…LVWR) and 1204 to 1246 (KEAH…EEDP). Residues 1163–1172 (TGPSTGTGNS) are compositionally biased toward polar residues. Residues 1204–1215 (KEAHLEKEEKRP) show a composition bias toward basic and acidic residues. Polar residues predominate over residues 1220–1230 (AQGQALSSLSN). The stretch at 1271 to 1302 (HQASLDEATRLQEELQAKLEELQKKQHEAKLA) forms a coiled coil.

This is an uncharacterized protein from Homo sapiens (Human).